The chain runs to 269 residues: 4-hydroxy-tetrahydrodipicolinate reductase (269 aa).

Residues 12 to 17 (GGSGRM), 102 to 104 (GTT), and 126 to 129 (SPNM) contribute to the NAD(+) site. Residue histidine 159 is the Proton donor/acceptor of the active site. Histidine 160 provides a ligand contact to (S)-2,3,4,5-tetrahydrodipicolinate. The active-site Proton donor is lysine 163. 169 to 170 (GT) is a (S)-2,3,4,5-tetrahydrodipicolinate binding site.

Belongs to the DapB family.

It is found in the cytoplasm. The catalysed reaction is (S)-2,3,4,5-tetrahydrodipicolinate + NAD(+) + H2O = (2S,4S)-4-hydroxy-2,3,4,5-tetrahydrodipicolinate + NADH + H(+). It carries out the reaction (S)-2,3,4,5-tetrahydrodipicolinate + NADP(+) + H2O = (2S,4S)-4-hydroxy-2,3,4,5-tetrahydrodipicolinate + NADPH + H(+). It functions in the pathway amino-acid biosynthesis; L-lysine biosynthesis via DAP pathway; (S)-tetrahydrodipicolinate from L-aspartate: step 4/4. In terms of biological role, catalyzes the conversion of 4-hydroxy-tetrahydrodipicolinate (HTPA) to tetrahydrodipicolinate. This is 4-hydroxy-tetrahydrodipicolinate reductase from Leptospira borgpetersenii serovar Hardjo-bovis (strain JB197).